We begin with the raw amino-acid sequence, 296 residues long: Thiamine-monophosphate kinase (296 aa).

Mg(2+) is bound by residues Asp-32, Thr-46, and Asp-48. Asp-55 contacts substrate. 2 residues coordinate Mg(2+): Asp-76 and Asp-121. ATP is bound by residues 120 to 121 (GD) and Arg-144. Asp-206 contacts Mg(2+). Ser-208 serves as a coordination point for ATP. Residue Asp-209 coordinates Mg(2+). Tyr-293 is a binding site for substrate.

It belongs to the thiamine-monophosphate kinase family.

It catalyses the reaction thiamine phosphate + ATP = thiamine diphosphate + ADP. It functions in the pathway cofactor biosynthesis; thiamine diphosphate biosynthesis; thiamine diphosphate from thiamine phosphate: step 1/1. In terms of biological role, catalyzes the ATP-dependent phosphorylation of thiamine-monophosphate (TMP) to form thiamine-pyrophosphate (TPP), the active form of vitamin B1. The sequence is that of Thiamine-monophosphate kinase from Archaeoglobus fulgidus (strain ATCC 49558 / DSM 4304 / JCM 9628 / NBRC 100126 / VC-16).